A 157-amino-acid polypeptide reads, in one-letter code: Cell cycle control protein 50C (157 aa).

The Cytoplasmic portion of the chain corresponds to M1–R34. A helical transmembrane segment spans residues V35–L55. The Extracellular portion of the chain corresponds to S56 to V157. An N-linked (GlcNAc...) asparagine glycan is attached at N66.

It belongs to the CDC50/LEM3 family.

The protein localises to the membrane. This is Cell cycle control protein 50C (TMEM30C) from Pan troglodytes (Chimpanzee).